The following is a 475-amino-acid chain: MSTTPTITLADLERIREPYKVLSKTARPENPSGQCTYREYLFSDAVKYPIYKRATMTNEEIVTFFGKITSDKHTHMTESDMWTFVQCALSLKDPVDRSSIFDKGFWDANHLCADYATAQPANTGKVAMSHHNPGVVVTQLVPKYDTGGSSSQETESMASKAEAISFYFAWLTRFSVKQAPNTINVLYDRVRATYLKFYSTSSSIFDTFRPSNTWLQGLKDAFDTFPRVKNTLILHVAHAETYFRPTPKIFNVLRFLFFQNLEFMGLHAYVSIVTIMSKVALPPSQVLSWLRVSGSEMAIDEAFMIMNTLDNGMIDNGHNAERLWKYARCLDQGYFNRLQSSYSAELIAMLAYIEINMGISTEVGYNSPLNIYAIANNKAVKEVGRMKADVFIQCKNSVVSLTQDASVIDKVYAAAQQKHIRSEEAARPSEQNKEDEVVAMDTDAPSRKRRSDALTTEKPKKALPAIIKLPNIPDF.

Basic and acidic residues-rich tracts occupy residues 421–436 and 451–460; these read RSEE…KEDE and SDALTTEKPK. Residues 421–461 are disordered; the sequence is RSEEAARPSEQNKEDEVVAMDTDAPSRKRRSDALTTEKPKK.

This sequence belongs to the nucleorhabdovirus nucleocapsid protein family.

It localises to the virion. The chain is Nucleoprotein (N) from Aphis (Hairy beggarticks).